Reading from the N-terminus, the 554-residue chain is (E)-nerolidol synthase TPS18VF (554 aa).

Residues Arg276, Asp313, Asp317, Arg455, and Asp458 each contribute to the (2E,6E)-farnesyl diphosphate site. 2 residues coordinate Mg(2+): Asp313 and Asp317. The DDXXD motif signature appears at 313 to 317 (DDIFD). 3 residues coordinate Mg(2+): Asp458, Ser462, and Glu466.

This sequence belongs to the terpene synthase family. Tpsb subfamily. The cofactor is Mg(2+). It depends on Mn(2+) as a cofactor. Highly expressed in glandular trichomes.

The enzyme catalyses (2E,6E)-farnesyl diphosphate + H2O = (6E)-nerolidol + diphosphate. The catalysed reaction is (2E)-geranyl diphosphate + H2O = (R)-linalool + diphosphate. It carries out the reaction (2E)-geranyl diphosphate + H2O = (S)-linalool + diphosphate. It participates in secondary metabolite biosynthesis; terpenoid biosynthesis. Functionally, involved in sesquiterpene olefins biosynthesis, constituants of cannabinoids and terpenoids-rich resins. Catalyzes primarily the conversion of (2E)-farnesyl diphosphate to (E)-nerolidol, and the conversion of (2E)-geranyl diphosphate to (+)linalool and (-)linalool. The polypeptide is (E)-nerolidol synthase TPS18VF (Cannabis sativa (Hemp)).